The sequence spans 759 residues: DNA replication licensing factor mcm-5 (759 aa).

Residues 330 to 536 form the MCM domain; that stretch reads AYELIAKSIA…KDATLAKHVI (207 aa). Arginine 370 provides a ligand contact to ADP. The Arginine finger signature appears at 511–514; it reads SRFD.

This sequence belongs to the MCM family. As to quaternary structure, component of the mcm2-7 complex. The complex forms a toroidal hexameric ring with the proposed subunit order mcm2-mcm6-mcm4-mcm7-mcm3-mcm5 (By simililarity).

The protein localises to the nucleus. It localises to the cytoplasm. It is found in the cytosol. The enzyme catalyses ATP + H2O = ADP + phosphate + H(+). Its function is as follows. Acts as a component of the MCM2-7 complex (MCM complex) which is the replicative helicase essential for 'once per cell cycle' DNA replication initiation and elongation in eukaryotic cells. Core component of CDC45-MCM-GINS (CMG) helicase, the molecular machine that unwinds template DNA during replication, and around which the replisome is built. The active ATPase sites in the MCM2-7 ring are formed through the interaction surfaces of two neighboring subunits such that a critical structure of a conserved arginine finger motif is provided in trans relative to the ATP-binding site of the Walker A box of the adjacent subunit. The six ATPase active sites, however, are likely to contribute differentially to the complex helicase activity. This is DNA replication licensing factor mcm-5 (mcm-5) from Caenorhabditis elegans.